A 247-amino-acid chain; its full sequence is Killer cell lectin-like receptor subfamily I member 2 (247 aa).

Over residues 1 to 12 (MPRKKQNERGTN) the composition is skewed to basic and acidic residues. The tract at residues 1 to 39 (MPRKKQNERGTNKQEIINIETKSSTFQEKQRQSKTDQIS) is disordered. Over 1–79 (MPRKKQNERG…GTDPWLTTWR (79 aa)) the chain is Cytoplasmic. Residues 80–100 (IITVILGTSCIILVTKVGFLI) traverse the membrane as a helical segment. Residues 101–247 (PNLFSRGEKR…KAYTCEFNLQ (147 aa)) are Extracellular-facing. Asn125, Asn196, Asn212, and Asn218 each carry an N-linked (GlcNAc...) asparagine glycan. One can recognise a C-type lectin domain in the interval 139 to 243 (FGNNFYLFFR…CSSKKAYTCE (105 aa)). 2 disulfide bridges follow: Cys160–Cys242 and Cys221–Cys234.

In terms of assembly, heterodimer with KLRE1. In terms of tissue distribution, expressed in natural killer (NK) cells.

It localises to the cell membrane. Its function is as follows. Lectin-like receptor for natural killer (NK) cells. Heterodimer formation with KLRE1 mediates NK cell cytolytic activity. The protein is Killer cell lectin-like receptor subfamily I member 2 of Rattus norvegicus (Rat).